A 97-amino-acid polypeptide reads, in one-letter code: Cystatin-A (97 aa).

Methionine 1 is subject to N-acetylmethionine. The Secondary area of contact signature appears at 46–50; sequence QVVAG.

It belongs to the cystatin family.

The protein localises to the cytoplasm. Its function is as follows. This is an intracellular thiol proteinase inhibitor. The protein is Cystatin-A (Csta) of Mus musculus (Mouse).